Consider the following 235-residue polypeptide: 2-C-methyl-D-erythritol 4-phosphate cytidylyltransferase (235 aa).

It belongs to the IspD/TarI cytidylyltransferase family. IspD subfamily.

It catalyses the reaction 2-C-methyl-D-erythritol 4-phosphate + CTP + H(+) = 4-CDP-2-C-methyl-D-erythritol + diphosphate. Its pathway is isoprenoid biosynthesis; isopentenyl diphosphate biosynthesis via DXP pathway; isopentenyl diphosphate from 1-deoxy-D-xylulose 5-phosphate: step 2/6. Its function is as follows. Catalyzes the formation of 4-diphosphocytidyl-2-C-methyl-D-erythritol from CTP and 2-C-methyl-D-erythritol 4-phosphate (MEP). This chain is 2-C-methyl-D-erythritol 4-phosphate cytidylyltransferase, found in Pseudomonas putida (strain GB-1).